The sequence spans 580 residues: Dihydroxy-acid dehydratase (580 aa).

D95 is a binding site for Mg(2+). C136 serves as a coordination point for [2Fe-2S] cluster. Residues D137 and K138 each coordinate Mg(2+). K138 carries the N6-carboxylysine modification. C209 provides a ligand contact to [2Fe-2S] cluster. E462 provides a ligand contact to Mg(2+). S488 serves as the catalytic Proton acceptor.

It belongs to the IlvD/Edd family. Homodimer. [2Fe-2S] cluster is required as a cofactor. Mg(2+) serves as cofactor.

It carries out the reaction (2R)-2,3-dihydroxy-3-methylbutanoate = 3-methyl-2-oxobutanoate + H2O. The enzyme catalyses (2R,3R)-2,3-dihydroxy-3-methylpentanoate = (S)-3-methyl-2-oxopentanoate + H2O. The protein operates within amino-acid biosynthesis; L-isoleucine biosynthesis; L-isoleucine from 2-oxobutanoate: step 3/4. Its pathway is amino-acid biosynthesis; L-valine biosynthesis; L-valine from pyruvate: step 3/4. Functions in the biosynthesis of branched-chain amino acids. Catalyzes the dehydration of (2R,3R)-2,3-dihydroxy-3-methylpentanoate (2,3-dihydroxy-3-methylvalerate) into 2-oxo-3-methylpentanoate (2-oxo-3-methylvalerate) and of (2R)-2,3-dihydroxy-3-methylbutanoate (2,3-dihydroxyisovalerate) into 2-oxo-3-methylbutanoate (2-oxoisovalerate), the penultimate precursor to L-isoleucine and L-valine, respectively. The chain is Dihydroxy-acid dehydratase from Leuconostoc mesenteroides subsp. mesenteroides (strain ATCC 8293 / DSM 20343 / BCRC 11652 / CCM 1803 / JCM 6124 / NCDO 523 / NBRC 100496 / NCIMB 8023 / NCTC 12954 / NRRL B-1118 / 37Y).